The chain runs to 412 residues: Serine hydroxymethyltransferase (412 aa).

(6S)-5,6,7,8-tetrahydrofolate contacts are provided by residues leucine 117 and 121–123; that span reads GHL. The residue at position 226 (lysine 226) is an N6-(pyridoxal phosphate)lysine.

Belongs to the SHMT family. Homodimer. It depends on pyridoxal 5'-phosphate as a cofactor.

It is found in the cytoplasm. It carries out the reaction (6R)-5,10-methylene-5,6,7,8-tetrahydrofolate + glycine + H2O = (6S)-5,6,7,8-tetrahydrofolate + L-serine. The protein operates within one-carbon metabolism; tetrahydrofolate interconversion. It participates in amino-acid biosynthesis; glycine biosynthesis; glycine from L-serine: step 1/1. Its function is as follows. Catalyzes the reversible interconversion of serine and glycine with tetrahydrofolate (THF) serving as the one-carbon carrier. This reaction serves as the major source of one-carbon groups required for the biosynthesis of purines, thymidylate, methionine, and other important biomolecules. Also exhibits THF-independent aldolase activity toward beta-hydroxyamino acids, producing glycine and aldehydes, via a retro-aldol mechanism. The polypeptide is Serine hydroxymethyltransferase (Staphylococcus epidermidis (strain ATCC 35984 / DSM 28319 / BCRC 17069 / CCUG 31568 / BM 3577 / RP62A)).